The following is a 192-amino-acid chain: uncharacterized protein (192 aa).

In terms of domain architecture, Nudix hydrolase spans 29-160 (HRQAAVLIPI…PLDIYRRGDS (132 aa)). The Nudix box motif lies at 67-89 (GAVDDTDTSVIAAALREAEEEVA). The Mg(2+) site is built by E83 and E87.

This sequence belongs to the Nudix hydrolase family. PCD1 subfamily. Mn(2+) is required as a cofactor. The cofactor is Mg(2+).

Its function is as follows. Probably mediates the hydrolysis of some nucleoside diphosphate derivatives. This is an uncharacterized protein from Escherichia coli O6:H1 (strain CFT073 / ATCC 700928 / UPEC).